A 132-amino-acid polypeptide reads, in one-letter code: Small ribosomal subunit protein uS8 (132 aa).

This sequence belongs to the universal ribosomal protein uS8 family. In terms of assembly, part of the 30S ribosomal subunit. Contacts proteins S5 and S12.

Functionally, one of the primary rRNA binding proteins, it binds directly to 16S rRNA central domain where it helps coordinate assembly of the platform of the 30S subunit. The protein is Small ribosomal subunit protein uS8 of Brucella anthropi (strain ATCC 49188 / DSM 6882 / CCUG 24695 / JCM 21032 / LMG 3331 / NBRC 15819 / NCTC 12168 / Alc 37) (Ochrobactrum anthropi).